Here is a 144-residue protein sequence, read N- to C-terminus: Transcription antitermination protein NusB (144 aa).

Belongs to the NusB family.

Its function is as follows. Involved in transcription antitermination. Required for transcription of ribosomal RNA (rRNA) genes. Binds specifically to the boxA antiterminator sequence of the ribosomal RNA (rrn) operons. The sequence is that of Transcription antitermination protein NusB from Carboxydothermus hydrogenoformans (strain ATCC BAA-161 / DSM 6008 / Z-2901).